The chain runs to 244 residues: MSDYVIECHNLETAYVGSLNRPILNEISCHIKQGEFVVLLGLNGAGKSTLLRSLVGLVPLVKGEVHINGVAMNSRILPQIRRDVGMLFQGGGLIPQLSAIENVLCGRLGTRTTWQTLFGFPKRDRLLALELLEQLGLRELAYQRTSKLSGGQQQRVAIARALIQSPQILLADEPTTGLDVIATQQVMETLAELHTQQGMTVVAVLHDLGMAARYAQRAIVLDAGRIVYEGSCDNLQAQFVVNSQ.

The ABC transporter domain maps to 6-244 (IECHNLETAY…LQAQFVVNSQ (239 aa)). 41–48 (GLNGAGKS) contacts ATP.

It belongs to the ABC transporter superfamily. Phosphonates importer (TC 3.A.1.9.1) family. In terms of assembly, the complex is composed of two ATP-binding proteins (PhnC), two transmembrane proteins (PhnE) and a solute-binding protein (PhnD).

The protein localises to the cell inner membrane. The catalysed reaction is phosphonate(out) + ATP + H2O = phosphonate(in) + ADP + phosphate + H(+). Functionally, part of the ABC transporter complex PhnCDE involved in phosphonates import. Responsible for energy coupling to the transport system. The sequence is that of Phosphonates import ATP-binding protein PhnC from Trichormus variabilis (strain ATCC 29413 / PCC 7937) (Anabaena variabilis).